The chain runs to 225 residues: Cytidylate kinase (225 aa).

Residue 11–19 coordinates ATP; that stretch reads GPAAAGKST.

It belongs to the cytidylate kinase family. Type 1 subfamily.

It localises to the cytoplasm. It catalyses the reaction CMP + ATP = CDP + ADP. It carries out the reaction dCMP + ATP = dCDP + ADP. In Bacillus cereus (strain ATCC 10987 / NRS 248), this protein is Cytidylate kinase.